A 257-amino-acid chain; its full sequence is ATP synthase delta chain, chloroplastic (257 aa).

The N-terminal 70 residues, 1 to 70 (MAALQNPVAL…PRGGALGTRM (70 aa)), are a transit peptide targeting the chloroplast.

This sequence belongs to the ATPase delta chain family. As to quaternary structure, F-type ATPases have 2 components, CF(1) - the catalytic core - and CF(0) - the membrane proton channel. CF(1) has five subunits: alpha(3), beta(3), gamma(1), delta(1), epsilon(1). CF(0) has three main subunits: a, b and c.

It is found in the plastid. The protein localises to the chloroplast thylakoid membrane. In terms of biological role, this protein seems to be part of the stalk that links CF(0) to CF(1). It either transmits conformational changes from CF(0) into CF(1) or is implicated in proton conduction. This is ATP synthase delta chain, chloroplastic (ATPD) from Spinacia oleracea (Spinach).